The chain runs to 344 residues: F17d-G fimbrial adhesin (344 aa).

The signal sequence occupies residues Met1–Ala22. Residues Ala23–Thr199 are receptor-binding lectin domain. A carbohydrate is bound by residues Ala65–Asn66, Asp110–Thr111, and Ser139–Gly142. A disulfide bridge links Cys75 with Cys132. The segment at Val200–Gln344 is fimbrillin-binding domain. The disordered stretch occupies residues Leu288–Gly308. Positions Asn299–Gly308 are enriched in polar residues.

This sequence belongs to the fimbrial protein family.

It localises to the fimbrium. Its function is as follows. Essential fimbrial adhesion factor that mediates binding to N-acetylglucosamine-containing receptors in the host intestinal microvilli, leading to colonization of the intestinal tissue, and diarrhea or septicemia. Also confers adhesiveness to laminin and basement membranes. In Escherichia coli, this protein is F17d-G fimbrial adhesin (f17dG).